The primary structure comprises 455 residues: Ribulose bisphosphate carboxylase large chain (455 aa).

K5 is subject to N6,N6,N6-trimethyllysine. Substrate-binding residues include N114 and T164. K166 serves as the catalytic Proton acceptor. K168 is a substrate binding site. Mg(2+)-binding residues include K192, D194, and E195. N6-carboxylysine is present on K192. Catalysis depends on H285, which acts as the Proton acceptor. 3 residues coordinate substrate: R286, H318, and S370.

It belongs to the RuBisCO large chain family. Type I subfamily. As to quaternary structure, heterohexadecamer of 8 large chains and 8 small chains; disulfide-linked. The disulfide link is formed within the large subunit homodimers. Mg(2+) serves as cofactor. The disulfide bond which can form in the large chain dimeric partners within the hexadecamer appears to be associated with oxidative stress and protein turnover.

The protein resides in the plastid. The protein localises to the chloroplast. The catalysed reaction is 2 (2R)-3-phosphoglycerate + 2 H(+) = D-ribulose 1,5-bisphosphate + CO2 + H2O. The enzyme catalyses D-ribulose 1,5-bisphosphate + O2 = 2-phosphoglycolate + (2R)-3-phosphoglycerate + 2 H(+). Its function is as follows. RuBisCO catalyzes two reactions: the carboxylation of D-ribulose 1,5-bisphosphate, the primary event in carbon dioxide fixation, as well as the oxidative fragmentation of the pentose substrate in the photorespiration process. Both reactions occur simultaneously and in competition at the same active site. The chain is Ribulose bisphosphate carboxylase large chain from Lupinus digitatus (Lupine).